A 325-amino-acid chain; its full sequence is Structure-specific endonuclease subunit SLX1 (325 aa).

Residues 10 to 92 (ALYTVYILRS…NNPHLSMHIP (83 aa)) form the GIY-YIG domain. Residues 230–284 (CVVCREEMKSGEGLHAVCTHEGCDGVGHISCWSRSFLKNNDTGSILPVQGQCPMC) form an SLX1-type zinc finger.

This sequence belongs to the SLX1 family. In terms of assembly, forms a heterodimer with SLX4. A divalent metal cation is required as a cofactor.

It localises to the nucleus. Its function is as follows. Catalytic subunit of the SLX1-SLX4 structure-specific endonuclease that resolves DNA secondary structures generated during DNA repair and recombination. Has endonuclease activity towards branched DNA substrates, introducing single-strand cuts in duplex DNA close to junctions with ss-DNA. This chain is Structure-specific endonuclease subunit SLX1, found in Chaetomium globosum (strain ATCC 6205 / CBS 148.51 / DSM 1962 / NBRC 6347 / NRRL 1970) (Soil fungus).